Consider the following 250-residue polypeptide: LOB domain-containing protein 37 (250 aa).

Residues Met-1 to Leu-107 form the LOB domain. A disordered region spans residues Asp-145–Ala-227. The segment covering Phe-157–Ser-170 has biased composition (low complexity).

This sequence belongs to the LOB domain-containing protein family. In terms of tissue distribution, expressed in young shoots, roots, stems, leaves and flowers.

In Arabidopsis thaliana (Mouse-ear cress), this protein is LOB domain-containing protein 37 (LBD37).